We begin with the raw amino-acid sequence, 325 residues long: Tartrate-resistant acid phosphatase type 5 (325 aa).

An N-terminal signal peptide occupies residues 1–21; the sequence is MDTWTLLLVLHTSLLLPWAEG. Residues asparagine 116 and asparagine 147 are each glycosylated (N-linked (GlcNAc...) asparagine).

Exists either as monomer or, after proteolytic processing, as a dimer of two chains linked by disulfide bond(s). The cofactor is Fe cation.

Its subcellular location is the lysosome. The catalysed reaction is a phosphate monoester + H2O = an alcohol + phosphate. This Oryctolagus cuniculus (Rabbit) protein is Tartrate-resistant acid phosphatase type 5 (ACP5).